The chain runs to 96 residues: Small ribosomal subunit protein uS19 (96 aa).

Belongs to the universal ribosomal protein uS19 family.

Protein S19 forms a complex with S13 that binds strongly to the 16S ribosomal RNA. The chain is Small ribosomal subunit protein uS19 from Gemmatimonas aurantiaca (strain DSM 14586 / JCM 11422 / NBRC 100505 / T-27).